The chain runs to 246 residues: Proteolipid protein DM gamma (246 aa).

4 helical membrane-spanning segments follow: residues 19–35 (LLAT…FCGC), 71–87 (VIYG…IILL), 118–134 (VFLT…VFGF), and 206–222 (FIVA…ALLI).

The protein belongs to the myelin proteolipid protein family. As to expression, highly expressed in white matter in myelinating shark brain.

Its subcellular location is the membrane. In Squalus acanthias (Spiny dogfish), this protein is Proteolipid protein DM gamma.